Consider the following 431-residue polypeptide: Enolase (431 aa).

Position 166 (Q166) interacts with (2R)-2-phosphoglycerate. The active-site Proton donor is E208. Positions 245, 288, and 315 each coordinate Mg(2+). 4 residues coordinate (2R)-2-phosphoglycerate: K340, R369, S370, and K391. K340 (proton acceptor) is an active-site residue.

Belongs to the enolase family. Mg(2+) serves as cofactor.

Its subcellular location is the cytoplasm. It localises to the secreted. The protein resides in the cell surface. It carries out the reaction (2R)-2-phosphoglycerate = phosphoenolpyruvate + H2O. It participates in carbohydrate degradation; glycolysis; pyruvate from D-glyceraldehyde 3-phosphate: step 4/5. In terms of biological role, catalyzes the reversible conversion of 2-phosphoglycerate (2-PG) into phosphoenolpyruvate (PEP). It is essential for the degradation of carbohydrates via glycolysis. This Clostridium perfringens (strain 13 / Type A) protein is Enolase.